The chain runs to 192 residues: uncharacterized protein (192 aa).

The 132-residue stretch at 29–160 (RRQAAVLIPL…PLDIQRRGHD (132 aa)) folds into the Nudix hydrolase domain. Residues 67 to 89 (GAVDSTDASLIAAALREAHEEVA) carry the Nudix box motif. Glu83 and Glu87 together coordinate Mg(2+).

It belongs to the Nudix hydrolase family. PCD1 subfamily. Mn(2+) is required as a cofactor. Requires Mg(2+) as cofactor.

In terms of biological role, probably mediates the hydrolysis of some nucleoside diphosphate derivatives. This is an uncharacterized protein from Enterobacter sp. (strain 638).